Reading from the N-terminus, the 617-residue chain is Probable Xaa-Pro aminopeptidase P (617 aa).

Mn(2+)-binding residues include Asp414, Asp425, Glu523, and Glu537.

The protein belongs to the peptidase M24B family. It depends on Mn(2+) as a cofactor.

It catalyses the reaction Release of any N-terminal amino acid, including proline, that is linked to proline, even from a dipeptide or tripeptide.. Its function is as follows. Catalyzes the removal of a penultimate prolyl residue from the N-termini of peptides. The polypeptide is Probable Xaa-Pro aminopeptidase P (AMPP) (Blastomyces gilchristii (strain SLH14081) (Blastomyces dermatitidis)).